The chain runs to 202 residues: Putative chromophore lyase CpcV (202 aa).

This sequence belongs to the CpcS/CpeS biliprotein lyase family.

Covalently attaches a chromophore to Cys residue(s) of phycobiliproteins. This chain is Putative chromophore lyase CpcV (cpcV), found in Picosynechococcus sp. (strain ATCC 27264 / PCC 7002 / PR-6) (Agmenellum quadruplicatum).